The following is a 209-amino-acid chain: Phosphoheptose isomerase (209 aa).

One can recognise an SIS domain in the interval 50–209 (IAETFRNGGK…ELVESMMGYA (160 aa)). 65 to 67 (NGG) is a binding site for substrate. 2 residues coordinate Zn(2+): His74 and Glu78. Substrate-binding positions include Glu78, 109 to 110 (ND), 135 to 137 (STS), Ser140, and Gln188. 2 residues coordinate Zn(2+): Gln188 and His196.

The protein belongs to the SIS family. GmhA subfamily. Zn(2+) serves as cofactor.

It is found in the cytoplasm. It catalyses the reaction 2 D-sedoheptulose 7-phosphate = D-glycero-alpha-D-manno-heptose 7-phosphate + D-glycero-beta-D-manno-heptose 7-phosphate. Its pathway is carbohydrate biosynthesis; D-glycero-D-manno-heptose 7-phosphate biosynthesis; D-glycero-alpha-D-manno-heptose 7-phosphate and D-glycero-beta-D-manno-heptose 7-phosphate from sedoheptulose 7-phosphate: step 1/1. Catalyzes the isomerization of sedoheptulose 7-phosphate in D-glycero-D-manno-heptose 7-phosphate. The chain is Phosphoheptose isomerase from Chlorobaculum parvum (strain DSM 263 / NCIMB 8327) (Chlorobium vibrioforme subsp. thiosulfatophilum).